The primary structure comprises 873 residues: Rho GTPase-activating protein gacJJ (873 aa).

The interval 64-147 (DEPSSINTSS…NVNNSSNAPT (84 aa)) is disordered. Residues 66 to 91 (PSSINTSSGNIGSNNNSSSNTPLTGS) are compositionally biased toward low complexity. A compositionally biased stretch (gly residues) spans 103–112 (IGGGGGGGDN). Over residues 113 to 144 (GITNSGNIGSSSNSDLKKSTSSGIVNVNNSSN) the composition is skewed to low complexity. Positions 301–402 (NPVREGYLKK…WTVLPIVIES (102 aa)) constitute a PH domain. Positions 428 to 621 (VPIEKTVSGN…SLIRDYQYIF (194 aa)) constitute a Rho-GAP domain. The SH3 domain maps to 628–694 (EQKILAKSLY…PASYVELLPH (67 aa)). A coiled-coil region spans residues 715 to 761 (MLEMESTKTKNQEIDKNIKQLEITKKELESTINDLENEKAALENDPT).

The protein resides in the cytoplasm. Its function is as follows. Rho GTPase-activating protein involved in the signal transduction pathway. In Dictyostelium discoideum (Social amoeba), this protein is Rho GTPase-activating protein gacJJ (gacJJ).